The following is a 226-amino-acid chain: UPF0758 protein Spy49_0870 (226 aa).

In terms of domain architecture, MPN spans 103–225 (SVLTSVQVAE…YYSFREKSTL (123 aa)). Zn(2+)-binding residues include His174, His176, and Asp187. The short motif at 174–187 (HNHPSGNIEPSSND) is the JAMM motif element.

This sequence belongs to the UPF0758 family.

This is UPF0758 protein Spy49_0870 from Streptococcus pyogenes serotype M49 (strain NZ131).